A 220-amino-acid chain; its full sequence is MASATDARYGQKESSDQNFDYMFKILIIGNSSVGKTSFLFRYADDSFTPAFVSTVGIDFKVKTIYRNDKRIKLQIWDTAGQERYRTITTAYYRGAMGFILMYDITNEESFNAVQDWSTQIKTYSWDNAQVLLVGNKCDMEDERVVSSERGRQLADHLGFEFFEASAKDNINVKQTFERLVDVICEKMSESLDTADPAVTGAKQGPQLTDQQAPPHQDCAC.

GTP-binding residues include serine 31, serine 32, valine 33, glycine 34, lysine 35, threonine 36, serine 37, threonine 48, proline 49, serine 53, and threonine 54. Position 36 (threonine 36) interacts with Mg(2+). The Switch 1 motif lies at 49–58; it reads PAFVSTVGID. The Mg(2+) site is built by threonine 54 and aspartate 77. Glycine 80 contacts GTP. A Switch 2 motif is present at residues 80–96; the sequence is GQERYRTITTAYYRGAM. Threonine 86 is subject to Phosphothreonine. GTP-binding residues include asparagine 135, lysine 136, aspartate 138, alanine 166, and lysine 167. Residues serine 188 and serine 190 each carry the phosphoserine modification. Residues 194–220 form a disordered region; the sequence is ADPAVTGAKQGPQLTDQQAPPHQDCAC. 2 S-geranylgeranyl cysteine lipidation sites follow: cysteine 218 and cysteine 220. At cysteine 220 the chain carries Cysteine methyl ester.

It belongs to the small GTPase superfamily. Rab family. As to quaternary structure, interacts with RIMS1 and RIMS2. Interacts with Rabphilin-3A/RPH3A and Rab effector Noc2/RPH3AL. Interacts with SYTL4. Interacts with RAB3IP. Interacts with SGSM1 and SGSM3. Interacts with SYT1. Interacts with MYH9; this interaction is essential for lysosome exocytosis and plasma membrane repair. Interacts with STXBP1; this interaction promotes RAB3A dissociation from the vesicle membrane. Interacts with SNCA. Interacts with GDI1, GDI2, CHM and CHML; phosphorylation at Thr-86 disrupts these interactions. Interacts with MADD (via uDENN domain); the GTP-bound form is preferred for interaction. Requires Mg(2+) as cofactor. Post-translationally, phosphorylation of Thr-86 in the switch II region by LRRK2 prevents the association of RAB regulatory proteins, including CHM, CHML and RAB GDP dissociation inhibitors GDI1 and GDI2. In terms of tissue distribution, specifically expressed in brain.

It localises to the cytoplasm. The protein localises to the cytosol. It is found in the lysosome. The protein resides in the cytoplasmic vesicle. Its subcellular location is the secretory vesicle. It localises to the cell projection. The protein localises to the axon. It is found in the cell membrane. The protein resides in the presynapse. Its subcellular location is the postsynapse. It catalyses the reaction GTP + H2O = GDP + phosphate + H(+). Its activity is regulated as follows. Regulated by guanine nucleotide exchange factors (GEFs) including RAB3IL1 and MADD which promote the exchange of bound GDP for free GTP. Regulated by GTPase activating proteins (GAPs) including RAB3GAP1 and TBC1D10B which increase the GTP hydrolysis activity. Inhibited by GDP dissociation inhibitors (GDIs) which prevent Rab-GDP dissociation. Its function is as follows. The small GTPases Rab are key regulators of intracellular membrane trafficking, from the formation of transport vesicles to their fusion with membranes. Rabs cycle between an inactive GDP-bound form and an active GTP-bound form that is able to recruit to membranes different sets of downstream effectors directly responsible for vesicle formation, movement, tethering and fusion. RAB3A plays a central role in regulated exocytosis and secretion. Controls the recruitment, tethering and docking of secretory vesicles to the plasma membrane. Upon stimulation, switches to its active GTP-bound form, cycles to vesicles and recruits effectors such as RIMS1, RIMS2, Rabphilin-3A/RPH3A, RPH3AL or SYTL4 to help the docking of vesicules onto the plasma membrane. Upon GTP hydrolysis by GTPase-activating protein, dissociates from the vesicle membrane allowing the exocytosis to proceed. Stimulates insulin secretion through interaction with RIMS2 or RPH3AL effectors in pancreatic beta cells. Regulates calcium-dependent lysosome exocytosis and plasma membrane repair (PMR) via the interaction with 2 effectors, SYTL4 and myosin-9/MYH9. Acts as a positive regulator of acrosome content secretion in sperm cells by interacting with RIMS1. Also plays a role in the regulation of dopamine release by interacting with synaptotagmin I/SYT. The chain is Ras-related protein Rab-3A (RAB3A) from Bos taurus (Bovine).